A 93-amino-acid polypeptide reads, in one-letter code: Cell division topological specificity factor (93 aa).

It belongs to the MinE family.

In terms of biological role, prevents the cell division inhibition by proteins MinC and MinD at internal division sites while permitting inhibition at polar sites. This ensures cell division at the proper site by restricting the formation of a division septum at the midpoint of the long axis of the cell. This chain is Cell division topological specificity factor, found in Halorhodospira halophila (strain DSM 244 / SL1) (Ectothiorhodospira halophila (strain DSM 244 / SL1)).